Reading from the N-terminus, the 219-residue chain is Probable GTP-binding protein EngB (219 aa).

Positions 31 to 205 (VGVEIAFAGR…LSILNEWCHP (175 aa)) constitute an EngB-type G domain. GTP is bound by residues 39 to 46 (GRSNAGKS), 66 to 70 (GRTQL), 84 to 87 (DLPG), 151 to 154 (TKSD), and 184 to 186 (FSA). Residues S46 and T68 each coordinate Mg(2+).

Belongs to the TRAFAC class TrmE-Era-EngA-EngB-Septin-like GTPase superfamily. EngB GTPase family. Requires Mg(2+) as cofactor.

Its function is as follows. Necessary for normal cell division and for the maintenance of normal septation. This Shewanella sp. (strain ANA-3) protein is Probable GTP-binding protein EngB.